The following is a 401-amino-acid chain: Mannonate dehydratase (401 aa).

Belongs to the mannonate dehydratase family. Fe(2+) serves as cofactor. Mn(2+) is required as a cofactor.

The catalysed reaction is D-mannonate = 2-dehydro-3-deoxy-D-gluconate + H2O. It functions in the pathway carbohydrate metabolism; pentose and glucuronate interconversion. Catalyzes the dehydration of D-mannonate. This Brucella canis (strain ATCC 23365 / NCTC 10854 / RM-666) protein is Mannonate dehydratase.